A 126-amino-acid chain; its full sequence is E3 ubiquitin-protein ligase PPP1R11 (126 aa).

The interval 1–25 (MAEAGAGLSETVTETTVTVTTEPEN) is disordered. An N-acetylalanine modification is found at alanine 2. Low complexity predominate over residues 10–22 (ETVTETTVTVTTE). The atypical RING finger domain 1 stretch occupies residues 52 to 62 (HMGRRSSKCCC). The segment at 70–126 (FGESSTESDEEEEEGCGHTHCVRGHRKGRRRATLGPTPTTPPQPPDPSQPPPGPMQH) is disordered. Residues serine 73 and serine 74 each carry the phosphoserine modification. Position 75 is a phosphothreonine (threonine 75). A Phosphoserine modification is found at serine 77. Residues 85-94 (CGHTHCVRGH) are atypical RING finger domain 2. A compositionally biased stretch (basic residues) spans 89–101 (HCVRGHRKGRRRA). Positions 107–126 (PTTPPQPPDPSQPPPGPMQH) are enriched in pro residues. At threonine 109 the chain carries Phosphothreonine.

As to quaternary structure, interacts with TLR2 and UBE2D2. In terms of processing, auto-ubiquitinated. In terms of tissue distribution, widely expressed.

The catalysed reaction is S-ubiquitinyl-[E2 ubiquitin-conjugating enzyme]-L-cysteine + [acceptor protein]-L-lysine = [E2 ubiquitin-conjugating enzyme]-L-cysteine + N(6)-ubiquitinyl-[acceptor protein]-L-lysine.. It participates in protein modification; protein ubiquitination. In terms of biological role, atypical E3 ubiquitin-protein ligase which ubiquitinates TLR2 at 'Lys-754' leading to its degradation by the proteasome. Plays a role in regulating inflammatory cytokine release and gram-positive bacterial clearance by functioning, in part, through the ubiquitination and degradation of TLR2. Inhibitor of protein phosphatase 1. The polypeptide is E3 ubiquitin-protein ligase PPP1R11 (PPP1R11) (Homo sapiens (Human)).